Consider the following 445-residue polypeptide: Argininosuccinate lyase (445 aa).

Belongs to the lyase 1 family. Argininosuccinate lyase subfamily.

The protein resides in the cytoplasm. The catalysed reaction is 2-(N(omega)-L-arginino)succinate = fumarate + L-arginine. It participates in amino-acid biosynthesis; L-arginine biosynthesis; L-arginine from L-ornithine and carbamoyl phosphate: step 3/3. The sequence is that of Argininosuccinate lyase from Xylella fastidiosa (strain 9a5c).